Consider the following 606-residue polypeptide: Polypeptide N-acetylgalactosaminyltransferase 9 (606 aa).

Over 1 to 6 (MAVARK) the chain is Cytoplasmic. A helical; Signal-anchor for type II membrane protein transmembrane segment spans residues 7-29 (IRTLLTVNILVFVGIVLFSVYCR). Topologically, residues 30–606 (LQGRSQELVR…IRNWIKHARH (577 aa)) are lumenal. The disordered stretch occupies residues 43–62 (GGCRPRPATPAPGSPLRSGG). 2 disulfide bridges follow: Cys144–Cys375 and Cys366–Cys445. Residues 153–264 (LPQVSVVFIF…TGWAEPALSR (112 aa)) form a catalytic subdomain A region. Positions 194 and 225 each coordinate substrate. Residues Asp248, His250, and His380 each contribute to the Mn(2+) site. A catalytic subdomain B region spans residues 321-383 (PIRTPAMIGC…PCSRVAHIER (63 aa)). Residues Arg383 and Tyr388 each coordinate substrate. N-linked (GlcNAc...) asparagine glycosylation occurs at Asn463. The Ricin B-type lectin domain maps to 467-603 (TYGEVRNSKA…KWMIRNWIKH (137 aa)). Disulfide bonds link Cys480–Cys496, Cys528–Cys543, and Cys570–Cys590.

Belongs to the glycosyltransferase 2 family. GalNAc-T subfamily. Requires Mn(2+) as cofactor.

Its subcellular location is the golgi apparatus membrane. It catalyses the reaction L-seryl-[protein] + UDP-N-acetyl-alpha-D-galactosamine = a 3-O-[N-acetyl-alpha-D-galactosaminyl]-L-seryl-[protein] + UDP + H(+). The catalysed reaction is L-threonyl-[protein] + UDP-N-acetyl-alpha-D-galactosamine = a 3-O-[N-acetyl-alpha-D-galactosaminyl]-L-threonyl-[protein] + UDP + H(+). It functions in the pathway protein modification; protein glycosylation. Functionally, catalyzes the initial reaction in O-linked oligosaccharide biosynthesis, the transfer of an N-acetyl-D-galactosamine residue to a serine or threonine residue on the protein receptor. Does not glycosylate apomucin or SDC3. The polypeptide is Polypeptide N-acetylgalactosaminyltransferase 9 (GALNT9) (Macaca fascicularis (Crab-eating macaque)).